Consider the following 185-residue polypeptide: Large ribosomal subunit protein uL6m (185 aa).

Belongs to the universal ribosomal protein uL6 family.

It is found in the mitochondrion. This chain is Large ribosomal subunit protein uL6m (RPL6), found in Reclinomonas americana.